The chain runs to 104 residues: Large ribosomal subunit protein bL21 (104 aa).

This sequence belongs to the bacterial ribosomal protein bL21 family. In terms of assembly, part of the 50S ribosomal subunit. Contacts protein L20.

Functionally, this protein binds to 23S rRNA in the presence of protein L20. In Endomicrobium trichonymphae, this protein is Large ribosomal subunit protein bL21.